Reading from the N-terminus, the 356-residue chain is Histidinol-phosphate aminotransferase (356 aa).

Residue lysine 213 is modified to N6-(pyridoxal phosphate)lysine.

This sequence belongs to the class-II pyridoxal-phosphate-dependent aminotransferase family. Histidinol-phosphate aminotransferase subfamily. As to quaternary structure, homodimer. Requires pyridoxal 5'-phosphate as cofactor.

It carries out the reaction L-histidinol phosphate + 2-oxoglutarate = 3-(imidazol-4-yl)-2-oxopropyl phosphate + L-glutamate. It functions in the pathway amino-acid biosynthesis; L-histidine biosynthesis; L-histidine from 5-phospho-alpha-D-ribose 1-diphosphate: step 7/9. The chain is Histidinol-phosphate aminotransferase from Clostridium novyi (strain NT).